The chain runs to 327 residues: GMP reductase (327 aa).

Cys176 acts as the Thioimidate intermediate in catalysis. 205-228 (IIADGGIRTHGDIAKSIRFGASMV) serves as a coordination point for NADP(+).

This sequence belongs to the IMPDH/GMPR family. GuaC type 2 subfamily.

The catalysed reaction is IMP + NH4(+) + NADP(+) = GMP + NADPH + 2 H(+). In terms of biological role, catalyzes the irreversible NADPH-dependent deamination of GMP to IMP. It functions in the conversion of nucleobase, nucleoside and nucleotide derivatives of G to A nucleotides, and in maintaining the intracellular balance of A and G nucleotides. This Streptococcus pyogenes serotype M1 protein is GMP reductase.